Here is a 436-residue protein sequence, read N- to C-terminus: Antilisterial bacteriocin subtilosin biosynthesis protein AlbD (436 aa).

The next 10 helical transmembrane spans lie at 27–47 (IAAGLVILAVFEIGLIRQAGI), 55–75 (TYIILALLLMNTYMVFLSVTS), 113–133 (LFFFILPLFLFGNGTLSGAQT), 134–154 (LFWLGRFSFFTVYSIIFGVVL), 164–184 (LMFLLHAAIFACVCISAALMP), 187–207 (TIPLCAVHILWAVVIDFPVFL), 240–260 (AMLLNYAVMAVFSGFFSFQMM), 270–290 (IYIVISALLLICSPIALLYSI), 315–335 (FYSGLLAGGFLLVVMIVGFIS), and 395–415 (AILAGTAVSLAVIPIAGLVIV).

It is found in the cell membrane. Functionally, involved in the production of the bacteriocin subtilosin. Required for immunity to subtilosin. The polypeptide is Antilisterial bacteriocin subtilosin biosynthesis protein AlbD (albD) (Bacillus subtilis (strain 168)).